We begin with the raw amino-acid sequence, 357 residues long: DNA replication and repair protein RecF (357 aa).

30–37 (GANGSGKT) lines the ATP pocket.

It belongs to the RecF family.

It is found in the cytoplasm. The RecF protein is involved in DNA metabolism; it is required for DNA replication and normal SOS inducibility. RecF binds preferentially to single-stranded, linear DNA. It also seems to bind ATP. The sequence is that of DNA replication and repair protein RecF from Salmonella paratyphi A (strain ATCC 9150 / SARB42).